A 495-amino-acid polypeptide reads, in one-letter code: MSELSSLTIAAARDKLRAREITATELTEACLAEVEGAGALGAFVHNTPDLARAQAEAADARLAAGDAPAMCGIPLGIKDLFCTKGVPSQAASAILGGFKPEYESTVTSQLFAAGAVMLGKLNMDEFAMGSSNETSTYGNAVNPWRRGNEDTALTPGGSSGGSASAVAADLCLAATGTDTGGSIRQPAAFVGITGLKPTYGRCSRWGIVAFASSLDQAGPMTKDVRDCAIMLGAMAGHDPKDSTSADLPVPDFEAMLTGDIRGKVIGIPKEYRMDGMPEEIEALWSRGAEMLRDAGAELRDITLPHTKYALPAYYVIAPAEASSNLARYDGVRFGHRAKLAQGDGITEMYEKTRAEGFGHEVQRRIMIGTYVLSAGFYDAYYNRARKVRALIKRDFDEVFAAGVDAILTPATPSAAFGLGEMAEADPVQMYLNDVFTVTVNLAGLPGIAVPAGLDKQGLPLGLQLIGRPWEEGDLLNTAYALEQAAGFVAKPNRWW.

Catalysis depends on charge relay system residues K78 and S158. S182 (acyl-ester intermediate) is an active-site residue.

The protein belongs to the amidase family. GatA subfamily. As to quaternary structure, heterotrimer of A, B and C subunits.

The catalysed reaction is L-glutamyl-tRNA(Gln) + L-glutamine + ATP + H2O = L-glutaminyl-tRNA(Gln) + L-glutamate + ADP + phosphate + H(+). Allows the formation of correctly charged Gln-tRNA(Gln) through the transamidation of misacylated Glu-tRNA(Gln) in organisms which lack glutaminyl-tRNA synthetase. The reaction takes place in the presence of glutamine and ATP through an activated gamma-phospho-Glu-tRNA(Gln). The protein is Glutamyl-tRNA(Gln) amidotransferase subunit A of Dinoroseobacter shibae (strain DSM 16493 / NCIMB 14021 / DFL 12).